The primary structure comprises 337 residues: Tryptophan--tRNA ligase (337 aa).

ATP-binding positions include 11–13 (QPT) and 19–20 (GN). Residues 12–20 (PTGALHLGN) carry the 'HIGH' region motif. Aspartate 135 is a binding site for L-tryptophan. ATP-binding positions include 147 to 149 (GED), valine 191, and 200 to 204 (KMSKS). The 'KMSKS' region motif lies at 200–204 (KMSKS).

This sequence belongs to the class-I aminoacyl-tRNA synthetase family. Homodimer.

It is found in the cytoplasm. The enzyme catalyses tRNA(Trp) + L-tryptophan + ATP = L-tryptophyl-tRNA(Trp) + AMP + diphosphate + H(+). Catalyzes the attachment of tryptophan to tRNA(Trp). In Prochlorococcus marinus (strain MIT 9313), this protein is Tryptophan--tRNA ligase.